We begin with the raw amino-acid sequence, 454 residues long: Phosphoglucosamine mutase (454 aa).

Catalysis depends on Ser101, which acts as the Phosphoserine intermediate. Mg(2+) contacts are provided by Ser101, Asp243, Asp245, and Asp247. Position 101 is a phosphoserine (Ser101).

Belongs to the phosphohexose mutase family. The cofactor is Mg(2+). In terms of processing, activated by phosphorylation.

It carries out the reaction alpha-D-glucosamine 1-phosphate = D-glucosamine 6-phosphate. Its function is as follows. Catalyzes the conversion of glucosamine-6-phosphate to glucosamine-1-phosphate. This Citrifermentans bemidjiense (strain ATCC BAA-1014 / DSM 16622 / JCM 12645 / Bem) (Geobacter bemidjiensis) protein is Phosphoglucosamine mutase.